Consider the following 221-residue polypeptide: Abscisic acid receptor PYL1 (221 aa).

Over residues 1–11 (MANSESSSSPV) the composition is skewed to low complexity. The interval 1-22 (MANSESSSSPVNEEENSQRIST) is disordered. An N-acetylalanine modification is found at Ala-2. An START-like region spans residues 50 to 206 (YQLGNGRCSS…NLQKLASITE (157 aa)). Abscisate is bound by residues Lys-86, 116 to 121 (ANTSRE), 143 to 149 (RLRNYKS), and Glu-171. The Gate loop motif lies at 112–116 (SGLPA). A Latch loop motif is present at residues 142 to 144 (HRL).

This sequence belongs to the PYR/PYL/RCAR abscisic acid intracellular receptor family. As to quaternary structure, homodimer. Binds ABA on one subunit only. Interacts with HAB1, ABI1 and ABI2, and possibly with other PP2Cs. Binds to CARs protein in an ABA-independent manner, both at the plasma membrane and in the nucleus. Interacts directly with CAR1 and CAR4.

It is found in the cytoplasm. It localises to the nucleus. The protein resides in the cell membrane. Receptor for abscisic acid (ABA) required for ABA-mediated responses such as stomatal closure and germination inhibition. Inhibits the activity of group-A protein phosphatases type 2C (PP2Cs) when activated by ABA. Can be activated by both (-)-ABA and (+)-ABA. The polypeptide is Abscisic acid receptor PYL1 (PYL1) (Arabidopsis thaliana (Mouse-ear cress)).